The following is an 84-amino-acid chain: GTP cyclohydrolase 1 feedback regulatory protein (84 aa).

This sequence belongs to the GFRP family. In terms of assembly, homopentamer. Forms a complex with GCH1 where a GCH1 homodecamer is sandwiched by two GFRP homopentamers.

The protein resides in the nucleus. Its subcellular location is the nucleus membrane. The protein localises to the cytoplasm. It localises to the cytosol. Mediates tetrahydrobiopterin inhibition of GTP cyclohydrolase 1. This is GTP cyclohydrolase 1 feedback regulatory protein (gchfr) from Xenopus tropicalis (Western clawed frog).